The chain runs to 182 residues: UPF0200 protein Mthe_1012 (182 aa).

Position 8–15 (8–15) interacts with ATP; the sequence is GMPGSGKS.

This sequence belongs to the UPF0200 family.

This Methanothrix thermoacetophila (strain DSM 6194 / JCM 14653 / NBRC 101360 / PT) (Methanosaeta thermophila) protein is UPF0200 protein Mthe_1012.